The chain runs to 873 residues: Polyribonucleotide nucleotidyltransferase (873 aa).

Residues Asp521 and Asp527 each coordinate Mg(2+). The KH domain occupies 587–646 (PRIITTTVPVDKIGEVIGPKGKMINQIQEDTGAEIAIEDDGTVYISSEGGEAAEKAKQII). In terms of domain architecture, S1 motif spans 658 to 730 (GETYKGTVVK…DRGKISLAIP (73 aa)). The disordered stretch occupies residues 727–873 (LAIPGFENQE…VRRDFDPFDD (147 aa)). A compositionally biased stretch (basic and acidic residues) spans 742-857 (RRSDDRPRRD…EYREGREVRH (116 aa)).

The protein belongs to the polyribonucleotide nucleotidyltransferase family. The cofactor is Mg(2+).

Its subcellular location is the cytoplasm. It carries out the reaction RNA(n+1) + phosphate = RNA(n) + a ribonucleoside 5'-diphosphate. Involved in mRNA degradation. Catalyzes the phosphorolysis of single-stranded polyribonucleotides processively in the 3'- to 5'-direction. The protein is Polyribonucleotide nucleotidyltransferase of Bifidobacterium animalis subsp. lactis (strain AD011).